The sequence spans 69 residues: Iota-conotoxin LtIIIA (69 aa).

The first 20 residues, 1 to 20 (MLKMGVLLFTFLVLFPLTTL), serve as a signal peptide directing secretion. Positions 21–52 (ELDTDRPVERHAAIKQDLKPQERRGIRLHAPR) are excised as a propeptide. Glutamate 54 and glutamate 57 each carry 4-carboxyglutamate. Cystine bridges form between cysteine 55-cysteine 67, cysteine 56-cysteine 65, and cysteine 61-cysteine 68. Residue proline 58 is modified to 4-hydroxyproline.

In terms of tissue distribution, expressed by the venom duct.

Its subcellular location is the secreted. In terms of biological role, iota-conotoxins bind to voltage-gated sodium channels and act as agonists by shifting the voltage-dependence of activation to more hyperpolarized levels. This toxin enhances tetrodotoxin-sensitive sodium current in rat dorsal root ganglion neurons. This is Iota-conotoxin LtIIIA from Conus litteratus (Lettered cone).